A 129-amino-acid polypeptide reads, in one-letter code: Glycine cleavage system H protein (129 aa).

In terms of domain architecture, Lipoyl-binding spans 24–106 (LVRVGISAFA…HGEGWLLVVR (83 aa)). Lys-65 is modified (N6-lipoyllysine).

Belongs to the GcvH family. In terms of assembly, the glycine cleavage system is composed of four proteins: P, T, L and H. (R)-lipoate is required as a cofactor.

In terms of biological role, the glycine cleavage system catalyzes the degradation of glycine. The H protein shuttles the methylamine group of glycine from the P protein to the T protein. The polypeptide is Glycine cleavage system H protein (Prochlorococcus marinus (strain MIT 9303)).